We begin with the raw amino-acid sequence, 151 residues long: Deoxyuridine 5'-triphosphate nucleotidohydrolase (151 aa).

Substrate is bound by residues 70-72, Asn-83, and 87-89; these read RSG and TID.

This sequence belongs to the dUTPase family. Mg(2+) serves as cofactor.

The enzyme catalyses dUTP + H2O = dUMP + diphosphate + H(+). Its pathway is pyrimidine metabolism; dUMP biosynthesis; dUMP from dCTP (dUTP route): step 2/2. Functionally, this enzyme is involved in nucleotide metabolism: it produces dUMP, the immediate precursor of thymidine nucleotides and it decreases the intracellular concentration of dUTP so that uracil cannot be incorporated into DNA. This Ruegeria pomeroyi (strain ATCC 700808 / DSM 15171 / DSS-3) (Silicibacter pomeroyi) protein is Deoxyuridine 5'-triphosphate nucleotidohydrolase.